We begin with the raw amino-acid sequence, 251 residues long: Pyrroline-5-carboxylate reductase (251 aa).

This sequence belongs to the pyrroline-5-carboxylate reductase family.

Its subcellular location is the cytoplasm. The enzyme catalyses L-proline + NADP(+) = (S)-1-pyrroline-5-carboxylate + NADPH + 2 H(+). It catalyses the reaction L-proline + NAD(+) = (S)-1-pyrroline-5-carboxylate + NADH + 2 H(+). It participates in amino-acid biosynthesis; L-proline biosynthesis; L-proline from L-glutamate 5-semialdehyde: step 1/1. In terms of biological role, catalyzes the reduction of 1-pyrroline-5-carboxylate (PCA) to L-proline. The polypeptide is Pyrroline-5-carboxylate reductase (proC) (Methanobrevibacter smithii).